The following is a 458-amino-acid chain: Adenylosuccinate synthetase (458 aa).

GTP-binding positions include 17-23 (GDEGKGK) and 45-47 (GHT). D18 (proton acceptor) is an active-site residue. D18 and G45 together coordinate Mg(2+). Residues 18 to 21 (DEGK), 43 to 46 (NAGH), T137, R151, Q247, T262, and R330 each bind IMP. The active-site Proton donor is the H46. 326–332 (VTTGRSR) contacts substrate. GTP is bound by residues R332, 358-360 (KLD), and 440-442 (STS).

This sequence belongs to the adenylosuccinate synthetase family. Homodimer. The cofactor is Mg(2+).

The protein resides in the cytoplasm. The enzyme catalyses IMP + L-aspartate + GTP = N(6)-(1,2-dicarboxyethyl)-AMP + GDP + phosphate + 2 H(+). It functions in the pathway purine metabolism; AMP biosynthesis via de novo pathway; AMP from IMP: step 1/2. Functionally, plays an important role in the de novo pathway of purine nucleotide biosynthesis. Catalyzes the first committed step in the biosynthesis of AMP from IMP. In Verminephrobacter eiseniae (strain EF01-2), this protein is Adenylosuccinate synthetase.